A 494-amino-acid polypeptide reads, in one-letter code: Histidine--tRNA ligase (494 aa).

The segment at 1 to 20 (MAKDQKKQPRPKAETPKGFR) is disordered.

The protein belongs to the class-II aminoacyl-tRNA synthetase family. As to quaternary structure, homodimer.

The protein localises to the cytoplasm. It catalyses the reaction tRNA(His) + L-histidine + ATP = L-histidyl-tRNA(His) + AMP + diphosphate + H(+). The chain is Histidine--tRNA ligase from Paracoccus denitrificans (strain Pd 1222).